A 155-amino-acid polypeptide reads, in one-letter code: Ribosomal RNA large subunit methyltransferase H (155 aa).

2 residues coordinate S-adenosyl-L-methionine: Leu72 and Gly104.

The protein belongs to the RNA methyltransferase RlmH family. In terms of assembly, homodimer.

Its subcellular location is the cytoplasm. It carries out the reaction pseudouridine(1915) in 23S rRNA + S-adenosyl-L-methionine = N(3)-methylpseudouridine(1915) in 23S rRNA + S-adenosyl-L-homocysteine + H(+). Specifically methylates the pseudouridine at position 1915 (m3Psi1915) in 23S rRNA. This is Ribosomal RNA large subunit methyltransferase H from Fusobacterium nucleatum subsp. nucleatum (strain ATCC 25586 / DSM 15643 / BCRC 10681 / CIP 101130 / JCM 8532 / KCTC 2640 / LMG 13131 / VPI 4355).